The sequence spans 704 residues: Protein NPG1 (704 aa).

TPR repeat units lie at residues 24-57 (NGIC…SLNF), 58-90 (EEAR…QAAI), 177-210 (SHAV…QWNL), 309-342 (IERW…HEQP), 430-463 (PDLI…TGGS), 555-588 (FEVW…KQYS), 589-622 (ASML…DGSS), and 662-695 (RKAW…EESD).

As to quaternary structure, interacts with calmodulin in a calcium-dependent manner. In terms of tissue distribution, expressed only in pollen and in pollen tubes.

Its function is as follows. Calmodulin-binding protein essential for pollen germination, but not necessary for microsporogenesis or gametogenesis. This is Protein NPG1 from Arabidopsis thaliana (Mouse-ear cress).